Reading from the N-terminus, the 242-residue chain is Probable ABC transporter ATP-binding protein PEB1C (242 aa).

Residues 2-236 (IELKNVNKYY…PKTERARLFL (235 aa)) form the ABC transporter domain. ATP is bound at residue 34-41 (GPSGSGKS).

It belongs to the ABC transporter superfamily.

It is found in the cell inner membrane. Functionally, most probably involved, with PEB1, in a binding-protein-dependent transport system for an amino acid. Probably responsible for energy coupling to the transport system. The protein is Probable ABC transporter ATP-binding protein PEB1C (peb1C) of Campylobacter jejuni subsp. jejuni serotype O:23/36 (strain 81-176).